Reading from the N-terminus, the 515-residue chain is 2,3-bisphosphoglycerate-independent phosphoglycerate mutase (515 aa).

Mn(2+) is bound by residues aspartate 14 and serine 64. Residue serine 64 is the Phosphoserine intermediate of the active site. Substrate contacts are provided by residues histidine 125, 155–156, arginine 187, arginine 193, 263–266, and lysine 337; these read RD and RADR. Residues aspartate 404, histidine 408, aspartate 445, histidine 446, and histidine 464 each coordinate Mn(2+).

Belongs to the BPG-independent phosphoglycerate mutase family. As to quaternary structure, monomer. Mn(2+) is required as a cofactor.

It catalyses the reaction (2R)-2-phosphoglycerate = (2R)-3-phosphoglycerate. The protein operates within carbohydrate degradation; glycolysis; pyruvate from D-glyceraldehyde 3-phosphate: step 3/5. Functionally, catalyzes the interconversion of 2-phosphoglycerate and 3-phosphoglycerate. This Yersinia pestis bv. Antiqua (strain Antiqua) protein is 2,3-bisphosphoglycerate-independent phosphoglycerate mutase.